A 571-amino-acid polypeptide reads, in one-letter code: Cytochrome P450 monooxygenase g430 (571 aa).

The helical transmembrane segment at 8–28 threads the bilayer; it reads GALIWVVTSYILYAIISNFII. A heme-binding site is contributed by Cys-471. The segment at 552–571 is disordered; it reads CPLPAEAKLPKSRKPIGTAS.

The protein belongs to the cytochrome P450 family. It depends on heme as a cofactor.

The protein localises to the membrane. It participates in mycotoxin biosynthesis. Cytochrome P450 monooxygenase; part of the gene cluster that mediates the biosynthesis of 1233A, a natural compound known as an inhibitor of HMG-CoA synthase in the mevalonate pathway and with antibacterial and antifungal activities. The highly reducing polyketide synthase g433 is responsible for the 1233A backbone biosynthesis and the cytochrome P450 monooxygenase g430 catalyzes oxidation of the backbone. This Fusarium sp protein is Cytochrome P450 monooxygenase g430.